We begin with the raw amino-acid sequence, 152 residues long: AIG2-like protein D (152 aa).

Position 13-18 (13-18 (YGSLMA)) interacts with substrate. Glu-81 acts as the Proton acceptor in catalysis.

The protein belongs to the gamma-glutamylcyclotransferase family. As to expression, expressed mainly in leaves.

Functionally, putative gamma-glutamylcyclotransferase. In Arabidopsis thaliana (Mouse-ear cress), this protein is AIG2-like protein D.